The sequence spans 195 residues: uncharacterized protein (195 aa).

2 disordered regions span residues 1–54 (MPKG…SNKI) and 173–195 (LAGA…KPIS). The segment covering 7–20 (KPNEKKEELEKFAK) has biased composition (basic and acidic residues). The span at 45–54 (QNDSSSSNKI) shows a compositional bias: polar residues. Residues 48–97 (SSSSNKIVLSQAEKDLLRTELDKTEEEISTLKQVLSARQKHAAELKRKLG) adopt a coiled-coil conformation.

Belongs to the TPD52 family.

This is an uncharacterized protein from Caenorhabditis elegans.